The chain runs to 139 residues: Growth factor (139 aa).

The first 19 residues, 1 to 19 (MSMKYLMLLFATMIIRSFA), serve as a signal peptide directing secretion. Asparagine 34 carries N-linked (GlcNAc...) asparagine; by host glycosylation. One can recognise an EGF-like domain in the interval 41 to 81 (AIRLCGPEGDGYCLHGDCIHARDINGMYCRCSHGYTGIRCQ). 3 disulfides stabilise this stretch: cysteine 45–cysteine 58, cysteine 53–cysteine 69, and cysteine 71–cysteine 80. Asparagine 95 carries N-linked (GlcNAc...) asparagine; by host glycosylation.

It belongs to the orthopoxvirus OPG019 family.

It localises to the secreted. In terms of biological role, stimulates cellular proliferation (hyperplasia)and mobility around infected cells to promote rapid and efficient spread of infection. The chain is Growth factor (OPG019) from Camelus.